Consider the following 178-residue polypeptide: Protein GrpE (178 aa).

Belongs to the GrpE family. In terms of assembly, homodimer.

Its subcellular location is the cytoplasm. In terms of biological role, participates actively in the response to hyperosmotic and heat shock by preventing the aggregation of stress-denatured proteins, in association with DnaK and GrpE. It is the nucleotide exchange factor for DnaK and may function as a thermosensor. Unfolded proteins bind initially to DnaJ; upon interaction with the DnaJ-bound protein, DnaK hydrolyzes its bound ATP, resulting in the formation of a stable complex. GrpE releases ADP from DnaK; ATP binding to DnaK triggers the release of the substrate protein, thus completing the reaction cycle. Several rounds of ATP-dependent interactions between DnaJ, DnaK and GrpE are required for fully efficient folding. This Rickettsia akari (strain Hartford) protein is Protein GrpE.